Reading from the N-terminus, the 290-residue chain is Ribosomal RNA small subunit methyltransferase A (290 aa).

6 residues coordinate S-adenosyl-L-methionine: Asn-27, Leu-29, Gly-54, Glu-75, Asp-100, and Asn-125.

It belongs to the class I-like SAM-binding methyltransferase superfamily. rRNA adenine N(6)-methyltransferase family. RsmA subfamily.

It is found in the cytoplasm. It catalyses the reaction adenosine(1518)/adenosine(1519) in 16S rRNA + 4 S-adenosyl-L-methionine = N(6)-dimethyladenosine(1518)/N(6)-dimethyladenosine(1519) in 16S rRNA + 4 S-adenosyl-L-homocysteine + 4 H(+). Its function is as follows. Specifically dimethylates two adjacent adenosines (A1518 and A1519) in the loop of a conserved hairpin near the 3'-end of 16S rRNA in the 30S particle. May play a critical role in biogenesis of 30S subunits. The sequence is that of Ribosomal RNA small subunit methyltransferase A from Streptococcus thermophilus (strain CNRZ 1066).